Here is a 230-residue protein sequence, read N- to C-terminus: Urease accessory protein UreF (230 aa).

Belongs to the UreF family. UreD, UreF and UreG form a complex that acts as a GTP-hydrolysis-dependent molecular chaperone, activating the urease apoprotein by helping to assemble the nickel containing metallocenter of UreC. The UreE protein probably delivers the nickel.

Its subcellular location is the cytoplasm. Functionally, required for maturation of urease via the functional incorporation of the urease nickel metallocenter. This is Urease accessory protein UreF from Cupriavidus metallidurans (strain ATCC 43123 / DSM 2839 / NBRC 102507 / CH34) (Ralstonia metallidurans).